A 340-amino-acid chain; its full sequence is Speriolin-like protein (340 aa).

Disordered stretches follow at residues 42 to 73 (GGGH…RFTS) and 94 to 135 (APLS…KLSP). Ser-60 is subject to Phosphoserine. Basic and acidic residues predominate over residues 123-133 (PHSHRGTDRKL). Ser-134 is modified (phosphoserine).

This sequence belongs to the speriolin family.

It is found in the cytoplasm. The polypeptide is Speriolin-like protein (SPATC1L) (Homo sapiens (Human)).